The sequence spans 55 residues: uncharacterized protein (55 aa).

A run of 2 helical transmembrane segments spans residues 5 to 25 (LISIVCIAVFFCLNILGMMHM) and 26 to 46 (LPLYITSPLLFLSILFTLYRL).

The protein localises to the cell membrane. This is an uncharacterized protein from Bacillus subtilis (strain 168).